The following is a 190-amino-acid chain: Probable nicotinate-nucleotide adenylyltransferase (190 aa).

The protein belongs to the NadD family.

It catalyses the reaction nicotinate beta-D-ribonucleotide + ATP + H(+) = deamido-NAD(+) + diphosphate. It participates in cofactor biosynthesis; NAD(+) biosynthesis; deamido-NAD(+) from nicotinate D-ribonucleotide: step 1/1. Functionally, catalyzes the reversible adenylation of nicotinate mononucleotide (NaMN) to nicotinic acid adenine dinucleotide (NaAD). The chain is Probable nicotinate-nucleotide adenylyltransferase from Azobacteroides pseudotrichonymphae genomovar. CFP2.